An 875-amino-acid polypeptide reads, in one-letter code: Neurotrypsin (875 aa).

The first 20 residues, 1-20 (MTLARFALALLFGVLPEVVG), serve as a signal peptide directing secretion. Asn26 is a glycosylation site (N-linked (GlcNAc...) asparagine). Positions 51-72 (QRHRRTRPPPPLPRFPRPPRAL) are disordered. Over residues 58–71 (PPPPLPRFPRPPRA) the composition is skewed to pro residues. In terms of domain architecture, Kringle spans 93 to 165 (CPAGEPWVSV…GKVDWGYCDC (73 aa)). 20 disulfide bridges follow: Cys93–Cys165, Cys109–Cys149, Cys138–Cys163, Cys195–Cys259, Cys208–Cys269, Cys239–Cys249, Cys305–Cys369, Cys318–Cys379, Cys349–Cys359, Cys412–Cys475, Cys425–Cys485, Cys455–Cys465, Cys525–Cys589, Cys538–Cys599, Cys569–Cys579, Cys619–Cys750, Cys661–Cys677, Cys765–Cys831, Cys794–Cys808, and Cys821–Cys850. 4 consecutive SRCR domains span residues 170–271 (VRLR…MCSF), 280–381 (IRLV…SCTP), 387–487 (IRLA…ACYP), and 500–601 (VRLM…ICDY). The segment at 619 to 630 (CGLRLLHRRQKR) is zymogen activation region. In terms of domain architecture, Peptidase S1 spans 631–874 (IIGGKNSLRG…FVPWIKSVTK (244 aa)). His676 (charge relay system) is an active-site residue. Asn683 carries an N-linked (GlcNAc...) asparagine glycan. Asp726 (charge relay system) is an active-site residue. Residue Ser825 is the Charge relay system of the active site.

Belongs to the peptidase S1 family.

It localises to the secreted. Functionally, plays a role in neuronal plasticity and the proteolytic action may subserve structural reorganizations associated with learning and memory operations. The polypeptide is Neurotrypsin (PRSS12) (Saguinus labiatus (Red-chested mustached tamarin)).